The primary structure comprises 142 residues: Ribosome maturation factor RimP (142 aa).

This sequence belongs to the RimP family.

It is found in the cytoplasm. In terms of biological role, required for maturation of 30S ribosomal subunits. The chain is Ribosome maturation factor RimP from Wolinella succinogenes (strain ATCC 29543 / DSM 1740 / CCUG 13145 / JCM 31913 / LMG 7466 / NCTC 11488 / FDC 602W) (Vibrio succinogenes).